A 290-amino-acid chain; its full sequence is ADP-ribosylation factor-like protein 13A (290 aa).

GTP contacts are provided by residues 28 to 35 (GLNNSGKT), 71 to 75 (DLNGD), and 130 to 133 (NKQD). The interval 204–226 (SKNNTGSGERCSSHSFSTRTGMS) is disordered.

It belongs to the small GTPase superfamily. Arf family.

This chain is ADP-ribosylation factor-like protein 13A (ARL13A), found in Homo sapiens (Human).